The following is a 108-amino-acid chain: uncharacterized protein (108 aa).

Positions 1–24 are cleaved as a signal peptide; that stretch reads MNLWEFRFGKSFLFIPNFIMKVLA.

The protein to M.jannaschii MJ0803.

This is an uncharacterized protein from Methanocaldococcus jannaschii (strain ATCC 43067 / DSM 2661 / JAL-1 / JCM 10045 / NBRC 100440) (Methanococcus jannaschii).